A 2089-amino-acid chain; its full sequence is Non-reducing polyketide synthase PKS16 (2089 aa).

Residues 8 to 243 are N-terminal acylcarrier protein transacylase (SAT) domain (SAT); sequence VLFGDQTVDP…IKLPITAAFH (236 aa). Residues 342-364 are disordered; sequence AGIEVSRSTEMQPRQEQRTKPRS. Over residues 354-364 the composition is skewed to basic and acidic residues; sequence PRQEQRTKPRS. One can recognise a Ketosynthase family 3 (KS3) domain in the interval 364 to 793; it reads SSDIAIIGYA…GGNTSLLIED (430 aa). Residues cysteine 536, histidine 671, and histidine 710 each act as for beta-ketoacyl synthase activity in the active site. The interval 891–1214 is malonyl-CoA:ACP transacylase (MAT) domain; it reads VFLFTGQGSQ…SIANAYNSGV (324 aa). Positions 1273-1586 are product template (PT) domain; that stretch reads TTCLQVIENE…KRTTLQSLLG (314 aa). Positions 1276-1408 are N-terminal hotdog fold; sequence LQVIENETFT…CTVMYGDGHQ (133 aa). Positions 1276–1582 constitute a PKS/mFAS DH domain; it reads LQVIENETFT…FQQMKRTTLQ (307 aa). Histidine 1309 (proton acceptor; for dehydratase activity) is an active-site residue. Residues 1435 to 1582 form a C-terminal hotdog fold region; sequence IHRMLKEMIY…FQQMKRTTLQ (148 aa). The active-site Proton donor; for dehydratase activity is aspartate 1495. Residues 1617-1694 form the Carrier 1 domain; sequence QSPVAGFSKV…ELRAFFLDKM (78 aa). O-(pantetheine 4'-phosphoryl)serine is present on serine 1654. The tract at residues 1697–1730 is disordered; that stretch reads PQATANDDDSDDSSDDEGPGFSRSQSNSTISTPE. Acidic residues predominate over residues 1702–1714; that stretch reads NDDDSDDSSDDEG. Residues 1718–1728 show a composition bias toward polar residues; sequence SRSQSNSTIST. The 78-residue stretch at 1729-1806 folds into the Carrier 2 domain; the sequence is PEEPDVVNVL…DVQKALGAAP (78 aa). O-(pantetheine 4'-phosphoryl)serine is present on serine 1766. Positions 1848–2083 are thioesterase (TE) domain; sequence LFLLPDGAGS…VVGGNHFSIM (236 aa).

Its pathway is secondary metabolite biosynthesis. Functionally, non-reducing polyketide synthase; part of the gene cluster that mediates the biosynthesis of orcinol depsidone grayanic acid (GRA), the only major secondary metabolite known in C.grayi. The first step consists in the ring and depside synthesis by PKS16 leading to 4-O-demethylsphaerophorin, involving different orcinol-like rings, one with acetyl CoA and the other with octanoyl CoA as the starter. Further depsidone formation by the GRA cluster-specific cytochrome P450 leads to 4-O-demethylgrayanic acid. Finally, the cluster specific O-methyltransferase probably converts the 4-O-demethylgrayanic acid into grayanic acid. This is Non-reducing polyketide synthase PKS16 from Cladonia grayi (Gray's cup lichen).